The following is a 113-amino-acid chain: Cell cycle protein GpsB (113 aa).

The stretch at 36–68 (LDMVIKDYSTFTQEIEALQAENIRLVQELDNAP) forms a coiled coil.

Belongs to the GpsB family. In terms of assembly, forms polymers through the coiled coil domains. Interacts with PBP1, MreC and EzrA.

The protein resides in the cytoplasm. In terms of biological role, divisome component that associates with the complex late in its assembly, after the Z-ring is formed, and is dependent on DivIC and PBP2B for its recruitment to the divisome. Together with EzrA, is a key component of the system that regulates PBP1 localization during cell cycle progression. Its main role could be the removal of PBP1 from the cell pole after pole maturation is completed. Also contributes to the recruitment of PBP1 to the division complex. Not essential for septum formation. The polypeptide is Cell cycle protein GpsB (Listeria monocytogenes serotype 4b (strain CLIP80459)).